The following is a 604-amino-acid chain: Lipoma-preferred partner homolog (604 aa).

Disordered stretches follow at residues 31 to 96 (TPSI…LDDV) and 129 to 381 (DLES…AFRP). The span at 32–41 (PSISVSTQQT) shows a compositional bias: polar residues. Low complexity-rich tracts occupy residues 42-53 (PKKFAPVVAPKP) and 143-161 (GSGT…TPVT). Residues 207–226 (SYTTASTPSRPTFNVQVRTA) show a composition bias toward polar residues. Over residues 365-377 (SGYPSSGPTSSTP) the composition is skewed to low complexity. LIM zinc-binding domains lie at 406 to 465 (GRCA…INTL), 466 to 526 (EQCS…KFAP), and 527 to 595 (RCSV…RIQA).

It belongs to the zyxin/ajuba family.

Its subcellular location is the nucleus. The protein localises to the cytoplasm. It localises to the cell junction. Its function is as follows. May play a structural role at sites of cell adhesion in maintaining cell shape and motility. May be involved in signal transduction from cell adhesion sites to the nucleus. This chain is Lipoma-preferred partner homolog (LPP), found in Gallus gallus (Chicken).